The following is a 79-amino-acid chain: MAERSQHLQDVFLNTVRKQKISLTIFLVNGVKLTGIVTSFDNFCVLLRRDGHAQLVYKHAISTIMPGQPVQMFEGESSE.

The Sm domain occupies 10-70; it reads DVFLNTVRKQ…ISTIMPGQPV (61 aa).

The protein belongs to the Hfq family. In terms of assembly, homohexamer.

Its function is as follows. RNA chaperone that binds small regulatory RNA (sRNAs) and mRNAs to facilitate mRNA translational regulation in response to envelope stress, environmental stress and changes in metabolite concentrations. Also binds with high specificity to tRNAs. The polypeptide is RNA-binding protein Hfq (Bartonella quintana (strain Toulouse) (Rochalimaea quintana)).